Consider the following 778-residue polypeptide: Acyl-homoserine lactone acylase PvdQ (778 aa).

Residues 1 to 25 (MTISRQFTGLTLAGLFLGLSLSAQA) form the signal peptide. Positions 196-218 (IENNARAYQLADTRLQRFALDRG) are cleaved as a propeptide — spacer peptide. S219 functions as the Nucleophile in the catalytic mechanism.

The protein belongs to the peptidase S45 family. In terms of assembly, heterodimer of an alpha subunit and a beta subunit processed from the same precursor.

It localises to the periplasm. It carries out the reaction an N-acyl-L-homoserine lactone + H2O = L-homoserine lactone + a carboxylate. In terms of biological role, catalyzes the deacylation of acyl-homoserine lactone (AHL or acyl-HSL), releasing homoserine lactone (HSL) and the corresponding fatty acid. Possesses a specificity for the degradation of long-chain acyl-HSLs (side chains of 11 to 14 carbons in length). This chain is Acyl-homoserine lactone acylase PvdQ (pvdQ), found in Pseudomonas fluorescens (strain Pf0-1).